An 858-amino-acid polypeptide reads, in one-letter code: Bifunctional uridylyltransferase/uridylyl-removing enzyme (858 aa).

A uridylyltransferase region spans residues 1–324 (MSAHAAPSPE…PATSGITRVL (324 aa)). The segment at 325–681 (SADRFVEKQG…ARPSPIGDAL (357 aa)) is uridylyl-removing. Positions 443-565 (VDQHILMVLR…VGNERYLTAL (123 aa)) constitute an HD domain. ACT domains follow at residues 682–763 (QVLV…PSKG) and 790–858 (ILSV…AIAV).

Belongs to the GlnD family. Mg(2+) is required as a cofactor.

It catalyses the reaction [protein-PII]-L-tyrosine + UTP = [protein-PII]-uridylyl-L-tyrosine + diphosphate. The catalysed reaction is [protein-PII]-uridylyl-L-tyrosine + H2O = [protein-PII]-L-tyrosine + UMP + H(+). Its activity is regulated as follows. Uridylyltransferase (UTase) activity is inhibited by glutamine, while glutamine activates uridylyl-removing (UR) activity. Functionally, modifies, by uridylylation and deuridylylation, the PII regulatory proteins (GlnB and homologs), in response to the nitrogen status of the cell that GlnD senses through the glutamine level. Under low glutamine levels, catalyzes the conversion of the PII proteins and UTP to PII-UMP and PPi, while under higher glutamine levels, GlnD hydrolyzes PII-UMP to PII and UMP (deuridylylation). Thus, controls uridylylation state and activity of the PII proteins, and plays an important role in the regulation of nitrogen assimilation and metabolism. The polypeptide is Bifunctional uridylyltransferase/uridylyl-removing enzyme (Burkholderia orbicola (strain MC0-3)).